We begin with the raw amino-acid sequence, 325 residues long: Tetraacyldisaccharide 4'-kinase (325 aa).

55–62 (TAGGNGKT) provides a ligand contact to ATP.

The protein belongs to the LpxK family.

It carries out the reaction a lipid A disaccharide + ATP = a lipid IVA + ADP + H(+). It functions in the pathway glycolipid biosynthesis; lipid IV(A) biosynthesis; lipid IV(A) from (3R)-3-hydroxytetradecanoyl-[acyl-carrier-protein] and UDP-N-acetyl-alpha-D-glucosamine: step 6/6. Its function is as follows. Transfers the gamma-phosphate of ATP to the 4'-position of a tetraacyldisaccharide 1-phosphate intermediate (termed DS-1-P) to form tetraacyldisaccharide 1,4'-bis-phosphate (lipid IVA). This chain is Tetraacyldisaccharide 4'-kinase, found in Salmonella arizonae (strain ATCC BAA-731 / CDC346-86 / RSK2980).